A 100-amino-acid polypeptide reads, in one-letter code: Flagellar transcriptional regulator FlhD (100 aa).

The protein belongs to the FlhD family. Homodimer; disulfide-linked. Forms a heterohexamer composed of two FlhC and four FlhD subunits. Each FlhC binds a FlhD dimer, forming a heterotrimer, and a hexamer assembles by dimerization of two heterotrimers.

It localises to the cytoplasm. In terms of biological role, functions in complex with FlhC as a master transcriptional regulator that regulates transcription of several flagellar and non-flagellar operons by binding to their promoter region. Activates expression of class 2 flagellar genes, including fliA, which is a flagellum-specific sigma factor that turns on the class 3 genes. Also regulates genes whose products function in a variety of physiological pathways. This Ralstonia pickettii (strain 12D) protein is Flagellar transcriptional regulator FlhD.